Here is a 1379-residue protein sequence, read N- to C-terminus: MAQTLSFNGRRRVRKFFGKIPEVAEMPNLIEVQKASYDQFLMVEEPKGGRPDEGLQAVFKSVFPITDFSGASMLEFVSYEFEPPKFDVDECRQRDLTYAAPLKVTLRLIVFDIDEDTGAKSIKDIKEQSVYMGDMPLMTNNGTFIVNGTERVIVSQMHRSPGVFFDHDKGKSHSSGKLLFAARVIPYRGSWLDIEFDAKDIVYARIDRRRKIPVTSLLMALGMDGEEILDTFYTKSLYKRDGEGWRIPFKPETLKGAKAITEMVDADTGEVVVEAGKKLTPRLLRTLSDKGLKALKAADDDLYGNYLAGDIVNYSTGEIYLEAGDEIDEKTLGIILANGFDEIPVLGIDHINVGAYIRNTLTADKNENRQDALFDIYRVMRPGEPPTMESAEAMFNSLFFDAERYDLSAVGRVKMNMRLDLTVEDTVRILRKDDILAVVRMLVELRDGKGEIDDIDNLGNRRVRSVGELMENQYRLGLLRMERAIKERMSSIEIDTVMPQDLINAKPAAAAVREFFGSSQLSQFMDQVNPLSEITHKRRLSALGPGGLTRERAGFEVRDVHPTHYGRICPIETPEGPNIGLINSLATFARVNKYGFIESPYRRIVDGKVTSDVLYLSAMEEAKYYVAQANAEMNADGSFVDEFVVCRHAGEVMLAPRDSMNLMDVSPKQVVSVAAALIPFLENDDANRALMGSNMQRQAVPLLRAEAPFVGTGMEPVVARDSGAAIGARRGGVVDQVDATRIVIRATEDLEAGKSGVDIYRLQKFQRSNQNTCVNQRPLVTVGDEVNRGDILADGPSTDLGDLALGRNALVAFMPWNGYNYEDSILLSERIVADDVFTSIHIEEFEVMARDTKLGPEEITRDIPNVSEEALKNLDEAGIVYIGAEVQPGDILVGKITPKGESPMTPEEKLLRAIFGEKASDVRDTSMRMPPGTYGTIVEVRVFNRHGVEKDERAMAIEREEIERLAKDRDDEQAILDRNVYGRLIEMLRGQASIAGPKGFKKGSELSNAVVSEYPRSQWWMFAVEDEKVQSELEALRGQYDESKSRLEQRFMDKVEKVQRGDEMPPGVMKMVKVFVAVKRKIQPGDKMAGRHGNKGVVSRIVPVEDMPFLEDGTHVDVVLNPLGVPSRMNVGQILETHLGWACAGMGRQIGELIEAYKANGNIEPLRKTIGDVVGDGPKAEQVHEFDDDSVLRLADQWKRGVSIATPVFDGANEADVNDMLRLAGLKDSGQSTLYDGRTGEQFDRQVTVGYIYMLKLNHLVDDKIHARSIGPYSLVTQQPLGGKAQFGGQRFGEMEVWALEAYGAAYTLQEMLTVKSDDVAGRTKVYEAIVRGDDTFEAGIPESFNVLVKEMRSLGLSVELENTKLDEAQAAQLPDAAE.

Belongs to the RNA polymerase beta chain family. The RNAP catalytic core consists of 2 alpha, 1 beta, 1 beta' and 1 omega subunit. When a sigma factor is associated with the core the holoenzyme is formed, which can initiate transcription.

The catalysed reaction is RNA(n) + a ribonucleoside 5'-triphosphate = RNA(n+1) + diphosphate. DNA-dependent RNA polymerase catalyzes the transcription of DNA into RNA using the four ribonucleoside triphosphates as substrates. The polypeptide is DNA-directed RNA polymerase subunit beta (Rhizobium johnstonii (strain DSM 114642 / LMG 32736 / 3841) (Rhizobium leguminosarum bv. viciae)).